The chain runs to 140 residues: Phosphoribosyl-AMP cyclohydrolase (140 aa).

Asp84 is a Mg(2+) binding site. Cys85 contacts Zn(2+). Asp86 and Asp88 together coordinate Mg(2+). Residues Cys101 and Cys108 each contribute to the Zn(2+) site.

Belongs to the PRA-CH family. In terms of assembly, homodimer. It depends on Mg(2+) as a cofactor. The cofactor is Zn(2+).

It is found in the cytoplasm. It carries out the reaction 1-(5-phospho-beta-D-ribosyl)-5'-AMP + H2O = 1-(5-phospho-beta-D-ribosyl)-5-[(5-phospho-beta-D-ribosylamino)methylideneamino]imidazole-4-carboxamide. It functions in the pathway amino-acid biosynthesis; L-histidine biosynthesis; L-histidine from 5-phospho-alpha-D-ribose 1-diphosphate: step 3/9. Catalyzes the hydrolysis of the adenine ring of phosphoribosyl-AMP. This chain is Phosphoribosyl-AMP cyclohydrolase, found in Chloroherpeton thalassium (strain ATCC 35110 / GB-78).